A 142-amino-acid chain; its full sequence is Putative pre-16S rRNA nuclease (142 aa).

The protein belongs to the YqgF nuclease family.

It localises to the cytoplasm. Could be a nuclease involved in processing of the 5'-end of pre-16S rRNA. This chain is Putative pre-16S rRNA nuclease, found in Staphylococcus saprophyticus subsp. saprophyticus (strain ATCC 15305 / DSM 20229 / NCIMB 8711 / NCTC 7292 / S-41).